The sequence spans 852 residues: Bifunctional uridylyltransferase/uridylyl-removing enzyme (852 aa).

Positions 1–318 (MPANLSSALE…STPLRVTLRI (318 aa)) are uridylyltransferase. A uridylyl-removing region spans residues 319-672 (DDDYIQVNNQ…SRILPKSDSF (354 aa)). The HD domain occupies 436 to 558 (VDDHILTVVR…VQTHERLSAL (123 aa)). 2 consecutive ACT domains span residues 673 to 757 (QVMV…SRSR) and 785 to 852 (SVEI…EQLS).

This sequence belongs to the GlnD family. Requires Mg(2+) as cofactor.

It catalyses the reaction [protein-PII]-L-tyrosine + UTP = [protein-PII]-uridylyl-L-tyrosine + diphosphate. The enzyme catalyses [protein-PII]-uridylyl-L-tyrosine + H2O = [protein-PII]-L-tyrosine + UMP + H(+). Its activity is regulated as follows. Uridylyltransferase (UTase) activity is inhibited by glutamine, while glutamine activates uridylyl-removing (UR) activity. In terms of biological role, modifies, by uridylylation and deuridylylation, the PII regulatory proteins (GlnB and homologs), in response to the nitrogen status of the cell that GlnD senses through the glutamine level. Under low glutamine levels, catalyzes the conversion of the PII proteins and UTP to PII-UMP and PPi, while under higher glutamine levels, GlnD hydrolyzes PII-UMP to PII and UMP (deuridylylation). Thus, controls uridylylation state and activity of the PII proteins, and plays an important role in the regulation of nitrogen assimilation and metabolism. The sequence is that of Bifunctional uridylyltransferase/uridylyl-removing enzyme from Neisseria meningitidis serogroup B (strain ATCC BAA-335 / MC58).